We begin with the raw amino-acid sequence, 251 residues long: Triosephosphate isomerase (251 aa).

Substrate is bound at residue 9–11; it reads NWK. Residue His95 is the Electrophile of the active site. The active-site Proton acceptor is Glu167. Substrate is bound by residues Gly173, Ser213, and 234–235; that span reads GG.

This sequence belongs to the triosephosphate isomerase family. Homodimer.

It is found in the cytoplasm. It carries out the reaction D-glyceraldehyde 3-phosphate = dihydroxyacetone phosphate. The protein operates within carbohydrate biosynthesis; gluconeogenesis. It functions in the pathway carbohydrate degradation; glycolysis; D-glyceraldehyde 3-phosphate from glycerone phosphate: step 1/1. In terms of biological role, involved in the gluconeogenesis. Catalyzes stereospecifically the conversion of dihydroxyacetone phosphate (DHAP) to D-glyceraldehyde-3-phosphate (G3P). The protein is Triosephosphate isomerase of Ligilactobacillus salivarius (strain UCC118) (Lactobacillus salivarius).